An 89-amino-acid chain; its full sequence is Mu-theraphotoxin-Phlo1a (89 aa).

A signal peptide spans Met1–Ala22. Positions Glu23–Arg52 are excised as a propeptide. 3 cysteine pairs are disulfide-bonded: Cys54–Cys68, Cys61–Cys73, and Cys67–Cys81. Ile87 bears the Isoleucine amide mark.

The protein belongs to the neurotoxin 10 (Hwtx-1) family. 39 (Jztx-34) subfamily. In terms of tissue distribution, expressed by the venom gland.

It localises to the secreted. Its function is as follows. Gating-modifier toxin that inhibits voltage-gated sodium channel Nav by shifting the threshold for channel activation to more positive potentials. This toxin moderately inhibits human Nav1.7/SCN9A (IC(50)=459 nM) and weakly inhibits hNav1.2/SCN2A and hNav1.5/SCN5A (&lt;20% inhibition at 1 uM peptide). Inhibition of Nav1.7 is voltage-dependent, with lower inhibition at more positive test pulses. In Phlogius sp. (Tarantula spider), this protein is Mu-theraphotoxin-Phlo1a.